A 483-amino-acid chain; its full sequence is 3-isopropylmalate dehydratase large subunit (483 aa).

[4Fe-4S] cluster is bound by residues cysteine 361, cysteine 424, and cysteine 427.

This sequence belongs to the aconitase/IPM isomerase family. LeuC type 1 subfamily. As to quaternary structure, heterodimer of LeuC and LeuD. Requires [4Fe-4S] cluster as cofactor.

The enzyme catalyses (2R,3S)-3-isopropylmalate = (2S)-2-isopropylmalate. The protein operates within amino-acid biosynthesis; L-leucine biosynthesis; L-leucine from 3-methyl-2-oxobutanoate: step 2/4. Catalyzes the isomerization between 2-isopropylmalate and 3-isopropylmalate, via the formation of 2-isopropylmaleate. The sequence is that of 3-isopropylmalate dehydratase large subunit from Polaromonas naphthalenivorans (strain CJ2).